The sequence spans 248 residues: Probable transcriptional regulatory protein FTM_1203 (248 aa).

It belongs to the TACO1 family.

The protein localises to the cytoplasm. This chain is Probable transcriptional regulatory protein FTM_1203, found in Francisella tularensis subsp. mediasiatica (strain FSC147).